A 197-amino-acid chain; its full sequence is uncharacterized protein (197 aa).

The signal sequence occupies residues 1–30 (MSTYIIINIALLIAIVALIFFLSKKTKSEA).

This is an uncharacterized protein from Acanthamoeba polyphaga (Amoeba).